The sequence spans 473 residues: Glutamate--tRNA ligase 1 (473 aa).

The 'HIGH' region signature appears at 11–21 (PSPTGFLHIGG). The disordered stretch occupies residues 111–132 (REQARKEGRPPRYDGRWRDRAE). Positions 240–244 (KLSKR) match the 'KMSKS' region motif. Lys-243 lines the ATP pocket.

This sequence belongs to the class-I aminoacyl-tRNA synthetase family. Glutamate--tRNA ligase type 1 subfamily. As to quaternary structure, monomer.

Its subcellular location is the cytoplasm. It carries out the reaction tRNA(Glu) + L-glutamate + ATP = L-glutamyl-tRNA(Glu) + AMP + diphosphate. Its function is as follows. Catalyzes the attachment of glutamate to tRNA(Glu) in a two-step reaction: glutamate is first activated by ATP to form Glu-AMP and then transferred to the acceptor end of tRNA(Glu). The protein is Glutamate--tRNA ligase 1 of Beijerinckia indica subsp. indica (strain ATCC 9039 / DSM 1715 / NCIMB 8712).